A 302-amino-acid polypeptide reads, in one-letter code: Trans-4-hydroxy-L-proline dehydratase activating enzyme (302 aa).

Positions 14-297 (HDGPGIRSTV…KRLFEASNFN (284 aa)) constitute a Radical SAM core domain. 7 residues coordinate [4Fe-4S] cluster: C28, C32, C35, C54, C57, C60, and C93. 34-36 (WCH) is an S-adenosyl-L-methionine binding site. 4Fe-4S ferredoxin-type domains follow at residues 45–74 (KQVL…KGET) and 75–103 (KICL…IVGQ). Residues G133, 183–185 (DIK), and H257 each bind S-adenosyl-L-methionine.

It belongs to the organic radical-activating enzymes family. It depends on [4Fe-4S] cluster as a cofactor.

It carries out the reaction glycyl-[protein] + reduced [flavodoxin] + S-adenosyl-L-methionine = glycin-2-yl radical-[protein] + semiquinone [flavodoxin] + 5'-deoxyadenosine + L-methionine + H(+). Its function is as follows. Catalyzes activation of the trans-4-hydroxy-L-proline dehydratase under anaerobic conditions by generation of an organic free radical on a glycine residue, via a homolytic cleavage of S-adenosyl-L-methionine (SAM). Is involved in the anaerobic degradation of 4-hydroxyproline. The polypeptide is Trans-4-hydroxy-L-proline dehydratase activating enzyme (Clostridioides difficile (Peptoclostridium difficile)).